The chain runs to 163 residues: Large ribosomal subunit protein uL15 (163 aa).

Gly residues predominate over residues 27-37 (SGLGKTAGRGQ). Residues 27–46 (SGLGKTAGRGQKGQKSRSGV) form a disordered region.

It belongs to the universal ribosomal protein uL15 family. In terms of assembly, part of the 50S ribosomal subunit.

Binds to the 23S rRNA. This Zymomonas mobilis subsp. mobilis (strain ATCC 31821 / ZM4 / CP4) protein is Large ribosomal subunit protein uL15.